The following is a 225-amino-acid chain: MTEETPGFEEKPDVPSGATPDDAEPQAASEEGAAPAGDASENAGLVAQLDQVRTALNERTADLQRLQAEYQNYRRRVERDRVAVKEVAVANLLSELLPVLDDVGRAREHGELVGGFKSVAESLETTVAKLGLQQFGKEGEPFDPTIHEALMHSYAPDVTETTCVAILQPGYRIGERTIRPARVAVAEPQPGAQTVKPAEDAAEAQDSSGAEDDAGTKESGGPDEG.

Disordered regions lie at residues 1-44 (MTEE…ENAG) and 183-225 (VAVA…PDEG).

It belongs to the GrpE family. As to quaternary structure, homodimer.

Its subcellular location is the cytoplasm. Its function is as follows. Participates actively in the response to hyperosmotic and heat shock by preventing the aggregation of stress-denatured proteins, in association with DnaK and GrpE. It is the nucleotide exchange factor for DnaK and may function as a thermosensor. Unfolded proteins bind initially to DnaJ; upon interaction with the DnaJ-bound protein, DnaK hydrolyzes its bound ATP, resulting in the formation of a stable complex. GrpE releases ADP from DnaK; ATP binding to DnaK triggers the release of the substrate protein, thus completing the reaction cycle. Several rounds of ATP-dependent interactions between DnaJ, DnaK and GrpE are required for fully efficient folding. This chain is Protein GrpE, found in Streptomyces coelicolor (strain ATCC BAA-471 / A3(2) / M145).